Reading from the N-terminus, the 660-residue chain is ATP-dependent zinc metalloprotease FtsH (660 aa).

The tract at residues Met1 to Asp20 is disordered. Residues Met1–Arg24 are Cytoplasmic-facing. A helical membrane pass occupies residues Ile25–His45. Residues Ala46 to Pro118 are Extracellular-facing. A helical membrane pass occupies residues Gly119–Val139. The Cytoplasmic segment spans residues Tyr140–Ser660. Gly213–Thr220 contacts ATP. Residue His435 participates in Zn(2+) binding. Glu436 is a catalytic residue. Positions 439 and 511 each coordinate Zn(2+).

It in the central section; belongs to the AAA ATPase family. In the C-terminal section; belongs to the peptidase M41 family. Homohexamer. Zn(2+) is required as a cofactor.

The protein resides in the cell membrane. Functionally, acts as a processive, ATP-dependent zinc metallopeptidase for both cytoplasmic and membrane proteins. Plays a role in the quality control of integral membrane proteins. The chain is ATP-dependent zinc metalloprotease FtsH from Acidimicrobium ferrooxidans (strain DSM 10331 / JCM 15462 / NBRC 103882 / ICP).